Reading from the N-terminus, the 147-residue chain is Small ribosomal subunit protein bS16 (147 aa).

The disordered stretch occupies residues 81–147 (QKFTGDTSPS…GDNSGEKAEA (67 aa)). 2 stretches are compositionally biased toward basic and acidic residues: residues 95–104 (QPERPNKDDL) and 114–125 (EAPREAITKKSE). Over residues 126 to 140 (GAAADEASESAAGDN) the composition is skewed to low complexity.

The protein belongs to the bacterial ribosomal protein bS16 family.

This Cutibacterium acnes (strain DSM 16379 / KPA171202) (Propionibacterium acnes) protein is Small ribosomal subunit protein bS16.